The following is a 358-amino-acid chain: Peptide chain release factor 1 (358 aa).

Glutamine 235 is modified (N5-methylglutamine).

It belongs to the prokaryotic/mitochondrial release factor family. Methylated by PrmC. Methylation increases the termination efficiency of RF1.

Its subcellular location is the cytoplasm. Its function is as follows. Peptide chain release factor 1 directs the termination of translation in response to the peptide chain termination codons UAG and UAA. This is Peptide chain release factor 1 from Neisseria meningitidis serogroup C (strain 053442).